The primary structure comprises 1152 residues: Nardilysin (1152 aa).

The N-terminal stretch at 1-20 (MLRKVTVAAVCATRRKLCEA) is a signal peptide. Disordered regions lie at residues 81–108 (LGAD…KSPS) and 133–208 (MEGK…KKTT). Phosphoserine occurs at positions 86, 94, and 96. The span at 141-198 (TDDEEEEEVEEEEEDDDEDSGAEIEDDDEEGFDDEDEFDDEHDDDLDTEDNELEELEE) shows a compositional bias: acidic residues. His-234 provides a ligand contact to Zn(2+). Glu-237 serves as the catalytic Proton acceptor. Residues His-238 and Glu-315 each contribute to the Zn(2+) site.

Belongs to the peptidase M16 family. In terms of assembly, interacts with BACE1 and NRG1. Zn(2+) is required as a cofactor.

It localises to the mitochondrion. It is found in the cell projection. The protein localises to the dendrite. The catalysed reaction is Hydrolysis of polypeptides, preferably at -Xaa-|-Arg-Lys-, and less commonly at -Arg-|-Arg-Xaa-, in which Xaa is not Arg or Lys.. Its function is as follows. Cleaves peptide substrates on the N-terminus of arginine residues in dibasic pairs. Is a critical activator of BACE1- and ADAM17-mediated pro-neuregulin ectodomain shedding, involved in the positive regulation of axonal maturation and myelination. Required for proper functioning of 2-oxoglutarate dehydrogenase (OGDH). In Pongo abelii (Sumatran orangutan), this protein is Nardilysin.